The sequence spans 331 residues: Phosphoribosylformylglycinamidine cyclo-ligase (331 aa).

It belongs to the AIR synthase family.

The protein localises to the cytoplasm. It carries out the reaction 2-formamido-N(1)-(5-O-phospho-beta-D-ribosyl)acetamidine + ATP = 5-amino-1-(5-phospho-beta-D-ribosyl)imidazole + ADP + phosphate + H(+). Its pathway is purine metabolism; IMP biosynthesis via de novo pathway; 5-amino-1-(5-phospho-D-ribosyl)imidazole from N(2)-formyl-N(1)-(5-phospho-D-ribosyl)glycinamide: step 2/2. This is Phosphoribosylformylglycinamidine cyclo-ligase from Clostridium kluyveri (strain NBRC 12016).